The following is a 143-amino-acid chain: Actin-depolymerizing factor 5 (143 aa).

In terms of domain architecture, ADF-H spans 11–143 (GMNVKEECQR…GYDVIRGRAQ (133 aa)).

Belongs to the actin-binding proteins ADF family.

Actin-depolymerizing protein. Severs actin filaments (F-actin) and binds to actin monomers. The sequence is that of Actin-depolymerizing factor 5 (ADF5) from Oryza sativa subsp. japonica (Rice).